The primary structure comprises 885 residues: MTDNKDDKTISVAGKKTLTLKPSGVTQGTVRQDMGRGRTKAVVVETKRTRSPLKHKDERPITPVAAAPAAARPAEQRPMPPQPSGRPAPQPQPHQPRQEQNRPRGGVVLNDLSASEMEARRHALAAAQIRDAEEAKRRAEEEVRRRREEEERIAREKEEAARRAAEEAARPAVEAEKVEEKVEAATPAVAETRPLSERPAPAATPPAPAGVAPRGRRAGEDEEGERRHSSAGAPRGKVVRPEPAKPAPRAKGDEGRRQGKLTLTAAVDEDGSQRGRSLSAMRRRQEKFKRSQMQETREKISREVILPETITIQELSQRMSERAVDVIKFLMKEGQMMKPGDLIDADLAELIAGEFGHTVKRVSESDVEEGIFNISDADDEMHARPPIVTIMGHVDHGKTSLLDAIRHANVVAGEAGGITQHIGAYQVEQNGQKITFIDTPGHAAFTAMRARGAQATDIAILVVAADDSVMPQTIESINHAKAAGVPIIVAINKIDKPSADPQKVRTELLQHEVFVESMGGEVLDVEVSAKNQTNLDKLLEAILLQSEILDLKANPNRTAEGTVVEAELDRGRGAVATVLVQKGTLTPGQIIVAGDQWGRVRALVNDKGEHVKSAGPSTPVEVLGLSGTPAAGDRFAVVESESRAREISEYRQRLAREKAVARQSGSRGSLEQMMTQLQTSGVKEFPLVIKGDVQGSIEAISGALEKLGTDEVRARIVHSGAGGITESDVSLAEASNAAIIGFNVRANKQARDASERAGIEIRYYNIIYDLVDDVKAAMSGLLSPERRETFLGNAEILEVFNITKVGKVAGCRVTEGKVERGVGVRLVRDNVVIHEGKLKTLKRFKDEVSEVQSGQECGMAFENYEDIRAGDTIECFRVEHVTRTL.

Positions 1-295 are disordered; that stretch reads MTDNKDDKTI…EKFKRSQMQE (295 aa). The segment covering 63 to 77 has biased composition (low complexity); it reads PVAAAPAAARPAEQR. A compositionally biased stretch (pro residues) spans 78-94; sequence PMPPQPSGRPAPQPQPH. Residues 130–183 are compositionally biased toward basic and acidic residues; the sequence is RDAEEAKRRAEEEVRRRREEEERIAREKEEAARRAAEEAARPAVEAEKVEEKVE. The segment covering 184–201 has biased composition (low complexity); that stretch reads AATPAVAETRPLSERPAP. The tr-type G domain occupies 383–550; the sequence is ARPPIVTIMG…AILLQSEILD (168 aa). A G1 region spans residues 392-399; the sequence is GHVDHGKT. 392-399 is a GTP binding site; the sequence is GHVDHGKT. The G2 stretch occupies residues 417 to 421; the sequence is GITQH. A G3 region spans residues 438-441; the sequence is DTPG. GTP-binding positions include 438-442 and 492-495; these read DTPGH and NKID. Residues 492–495 form a G4 region; the sequence is NKID. Residues 528-530 form a G5 region; the sequence is SAK.

This sequence belongs to the TRAFAC class translation factor GTPase superfamily. Classic translation factor GTPase family. IF-2 subfamily.

Its subcellular location is the cytoplasm. Functionally, one of the essential components for the initiation of protein synthesis. Protects formylmethionyl-tRNA from spontaneous hydrolysis and promotes its binding to the 30S ribosomal subunits. Also involved in the hydrolysis of GTP during the formation of the 70S ribosomal complex. This is Translation initiation factor IF-2 from Sinorhizobium medicae (strain WSM419) (Ensifer medicae).